The chain runs to 545 residues: Chaperonin GroEL (545 aa).

Residues 30-33 (TLGP), K51, 87-91 (DGTTT), G415, 479-481 (NAA), and D495 contribute to the ATP site.

Belongs to the chaperonin (HSP60) family. Forms a cylinder of 14 subunits composed of two heptameric rings stacked back-to-back. Interacts with the co-chaperonin GroES.

The protein localises to the cytoplasm. It carries out the reaction ATP + H2O + a folded polypeptide = ADP + phosphate + an unfolded polypeptide.. Its function is as follows. Together with its co-chaperonin GroES, plays an essential role in assisting protein folding. The GroEL-GroES system forms a nano-cage that allows encapsulation of the non-native substrate proteins and provides a physical environment optimized to promote and accelerate protein folding. This chain is Chaperonin GroEL, found in Tolumonas auensis (strain DSM 9187 / NBRC 110442 / TA 4).